Reading from the N-terminus, the 112-residue chain is 2Fe-2S ferredoxin (112 aa).

The 2Fe-2S ferredoxin-type domain occupies 5–107; sequence IKVTFIVNDG…GIKVRLPSAT (103 aa). C42, C48, C51, and C88 together coordinate [2Fe-2S] cluster.

The protein belongs to the adrenodoxin/putidaredoxin family. The cofactor is [2Fe-2S] cluster.

Its function is as follows. Ferredoxin are iron-sulfur proteins that transfer electrons in a wide variety of metabolic reactions. This is 2Fe-2S ferredoxin (fdxB) from Rickettsia felis (strain ATCC VR-1525 / URRWXCal2) (Rickettsia azadi).